A 275-amino-acid polypeptide reads, in one-letter code: Sulfate transporter CysZ (275 aa).

Residues 1–24 (MSSEKSSFPEKPPSFEKPSHSNTA) are disordered. Basic and acidic residues predominate over residues 13 to 24 (PSFEKPSHSNTA). 4 helical membrane-spanning segments follow: residues 49 to 69 (FVIL…WWLF), 93 to 113 (LIWP…FSTI), 169 to 189 (IVLL…PVLW), and 232 to 252 (ALVS…PVAV).

It belongs to the CysZ family.

It is found in the cell inner membrane. Its function is as follows. High affinity, high specificity proton-dependent sulfate transporter, which mediates sulfate uptake. Provides the sulfur source for the cysteine synthesis pathway. This is Sulfate transporter CysZ from Pectobacterium atrosepticum (strain SCRI 1043 / ATCC BAA-672) (Erwinia carotovora subsp. atroseptica).